Reading from the N-terminus, the 460-residue chain is GTPase Der (460 aa).

2 consecutive EngA-type G domains span residues Gln2–Phe164 and Ile196–Thr368. Residues Gly8–Ser15, Asp55–Leu59, Asn116–Asp119, Gly202–Ser209, Asp249–Ile253, and Asn313–Asp316 each bind GTP. In terms of domain architecture, KH-like spans Gln369–Gly453.

It belongs to the TRAFAC class TrmE-Era-EngA-EngB-Septin-like GTPase superfamily. EngA (Der) GTPase family. In terms of assembly, associates with the 50S ribosomal subunit.

GTPase that plays an essential role in the late steps of ribosome biogenesis. This Campylobacter jejuni subsp. jejuni serotype O:23/36 (strain 81-176) protein is GTPase Der.